A 318-amino-acid polypeptide reads, in one-letter code: Trans-prenyltransferase (318 aa).

A helical membrane pass occupies residues 1–21 (MLHLIYISIIVVLIIILISYT). Isopentenyl diphosphate contacts are provided by Lys85, Arg88, and His122. Residues Asp129 and Asp135 each coordinate Mg(2+). Position 140 (Arg140) interacts with dimethylallyl diphosphate. Residue Arg141 participates in isopentenyl diphosphate binding. Dimethylallyl diphosphate is bound by residues Lys216, Thr217, and Gln254.

It belongs to the FPP/GGPP synthase family. Asfivirus trans-prenyltransferase subfamily. The cofactor is Mg(2+).

It is found in the host endoplasmic reticulum. It localises to the host membrane. The catalysed reaction is isopentenyl diphosphate + dimethylallyl diphosphate = (2E)-geranyl diphosphate + diphosphate. The enzyme catalyses isopentenyl diphosphate + (2E)-geranyl diphosphate = (2E,6E)-farnesyl diphosphate + diphosphate. It catalyses the reaction isopentenyl diphosphate + (2E,6E)-farnesyl diphosphate = (2E,6E,10E)-geranylgeranyl diphosphate + diphosphate. It carries out the reaction isopentenyl diphosphate + (2E,6E,10E)-geranylgeranyl diphosphate = (2E,6E,10E,14E)-geranylfarnesyl diphosphate + diphosphate. It functions in the pathway isoprenoid biosynthesis; farnesyl diphosphate biosynthesis; farnesyl diphosphate from geranyl diphosphate and isopentenyl diphosphate: step 1/1. Its pathway is isoprenoid biosynthesis; geranyl diphosphate biosynthesis; geranyl diphosphate from dimethylallyl diphosphate and isopentenyl diphosphate: step 1/1. The protein operates within isoprenoid biosynthesis; geranylgeranyl diphosphate biosynthesis; geranylgeranyl diphosphate from farnesyl diphosphate and isopentenyl diphosphate: step 1/1. Its function is as follows. Trans-prenyltransferase that catalyzes the sequential condensation of isopentenyl diphosphate (IPP) with different allylic diphosphates, such as dimethylallyl diphosphate (DMAPP), geranyl diphosphate (GPP), farnesyl diphosphate (FPP) and geranylgeranyl diphosphate (GGPP), farnesyl diphosphate being the best allylic substrate. The chain is Trans-prenyltransferase from African swine fever virus (isolate Tick/Malawi/Lil 20-1/1983) (ASFV).